The sequence spans 338 residues: Malate dehydrogenase, mitochondrial (338 aa).

The transit peptide at 1–24 (MLSALARPVGAALRRSFSTSAQNN) directs the protein to the mitochondrion. NAD(+) is bound by residues 31 to 37 (GASGGIG) and Asp57. O-linked (GlcNAc) serine glycosylation is present at Ser33. Residues Lys78 and Lys91 each carry the N6-acetyllysine; alternate modification. Residues Lys78 and Lys91 each carry the N6-succinyllysine; alternate modification. The substrate site is built by Arg104 and Arg110. Residues Asn117 and 140–142 (ISN) contribute to the NAD(+) site. Asn142 is a binding site for substrate. Lys165 is modified (N6-acetyllysine). Substrate is bound at residue Arg176. Lys185 carries the post-translational modification N6-acetyllysine; alternate. Lys185 carries the N6-succinyllysine; alternate modification. Residue His200 is the Proton acceptor of the active site. An N6-succinyllysine modification is found at Lys203. An N6-acetyllysine; alternate mark is found at Lys215 and Lys239. N6-succinyllysine; alternate occurs at positions 215 and 239. Lys239 carries the N6-malonyllysine; alternate modification. Ser246 carries the post-translational modification Phosphoserine. Met251 is a binding site for NAD(+). Lys269 is subject to N6-succinyllysine. An N6-acetyllysine; alternate mark is found at Lys296, Lys301, Lys307, Lys314, and Lys324. Residues Lys296, Lys301, Lys307, Lys314, and Lys324 each carry the N6-succinyllysine; alternate modification. N6-malonyllysine; alternate is present on Lys307. Ser326 carries the phosphoserine modification. An N6-acetyllysine; alternate mark is found at Lys328, Lys329, and Lys335. Position 328 is an N6-succinyllysine; alternate (Lys328). Lys329 carries the N6-malonyllysine; alternate modification. Lys335 bears the N6-succinyllysine; alternate mark.

The protein belongs to the LDH/MDH superfamily. MDH type 1 family. Homodimer. In terms of processing, acetylation is enhanced after treatment either with trichostin A (TCA) or with nicotinamide (NAM) with the appearance of tri- and tetraacetylations. Glucose also increases acetylation. Expressed in flagella of epididymal sperm.

Its subcellular location is the mitochondrion matrix. The catalysed reaction is (S)-malate + NAD(+) = oxaloacetate + NADH + H(+). With respect to regulation, enzyme activity is enhanced by acetylation. The chain is Malate dehydrogenase, mitochondrial (Mdh2) from Rattus norvegicus (Rat).